Reading from the N-terminus, the 828-residue chain is Periplasmic nitrate reductase (828 aa).

Residues 1–31 (MKLSRRSFMKANAVAAAAAAAGLSVPGVARA) constitute a signal peptide (tat-type signal). One can recognise a 4Fe-4S Mo/W bis-MGD-type domain in the interval 39–95 (IKWDKAPCRFCGTGCGVLVGTQQGRVVACQGDPDAPVNRGLNCIKGYFLPKIMYGKD). Residues C46, C49, C53, and C81 each coordinate [4Fe-4S] cluster. Mo-bis(molybdopterin guanine dinucleotide) is bound by residues K83, Q150, N175, C179, 212–219 (WGSNMAEM), 243–247 (STYQH), 262–264 (QSD), M372, Q376, N482, 508–509 (SD), K531, D558, and 718–727 (TGRVLEHWHT). Residue F794 coordinates substrate. Residues N802 and K819 each coordinate Mo-bis(molybdopterin guanine dinucleotide).

It belongs to the prokaryotic molybdopterin-containing oxidoreductase family. NasA/NapA/NarB subfamily. As to quaternary structure, component of the periplasmic nitrate reductase NapAB complex composed of NapA and NapB. It depends on [4Fe-4S] cluster as a cofactor. Requires Mo-bis(molybdopterin guanine dinucleotide) as cofactor. Predicted to be exported by the Tat system. The position of the signal peptide cleavage has not been experimentally proven.

Its subcellular location is the periplasm. The enzyme catalyses 2 Fe(II)-[cytochrome] + nitrate + 2 H(+) = 2 Fe(III)-[cytochrome] + nitrite + H2O. In terms of biological role, catalytic subunit of the periplasmic nitrate reductase complex NapAB. Receives electrons from NapB and catalyzes the reduction of nitrate to nitrite. The polypeptide is Periplasmic nitrate reductase (Escherichia coli O1:K1 / APEC).